The chain runs to 102 residues: Small ribosomal subunit protein uS10 (102 aa).

The protein belongs to the universal ribosomal protein uS10 family. As to quaternary structure, part of the 30S ribosomal subunit.

In terms of biological role, involved in the binding of tRNA to the ribosomes. The polypeptide is Small ribosomal subunit protein uS10 (Methylobacterium radiotolerans (strain ATCC 27329 / DSM 1819 / JCM 2831 / NBRC 15690 / NCIMB 10815 / 0-1)).